Consider the following 405-residue polypeptide: GTPase Obg (405 aa).

One can recognise an Obg domain in the interval 1–159 (MKFVDEVSIF…RDLKLELKVL (159 aa)). Residues 127–148 (NTRFKSSTNRAPRQTTPGKPGE) are disordered. Residues 129–143 (RFKSSTNRAPRQTTP) are compositionally biased toward polar residues. Residues 160–333 (ADVGLLGLPN…LCQDIMHYLD (174 aa)) enclose the OBG-type G domain. GTP-binding positions include 166-173 (GLPNAGKS), 191-195 (FTTLV), 213-216 (DIPG), 283-286 (NKAD), and 314-316 (SAL). Ser-173 and Thr-193 together coordinate Mg(2+). Over residues 383–398 (ALEDEDDFDDEDDGDG) the composition is skewed to acidic residues. The interval 383–405 (ALEDEDDFDDEDDGDGPEIFYVR) is disordered.

It belongs to the TRAFAC class OBG-HflX-like GTPase superfamily. OBG GTPase family. As to quaternary structure, monomer. The cofactor is Mg(2+).

It localises to the cytoplasm. Functionally, an essential GTPase which binds GTP, GDP and possibly (p)ppGpp with moderate affinity, with high nucleotide exchange rates and a fairly low GTP hydrolysis rate. Plays a role in control of the cell cycle, stress response, ribosome biogenesis and in those bacteria that undergo differentiation, in morphogenesis control. The sequence is that of GTPase Obg from Azotobacter vinelandii (strain DJ / ATCC BAA-1303).